The sequence spans 590 residues: Dystrobrevin-1 (590 aa).

Positions 1–10 are enriched in gly residues; sequence MLWSNGGGGP. Residues 1-25 form a disordered region; the sequence is MLWSNGGGGPREPSSAPSPDHHRAM. The ZZ-type zinc finger occupies 259 to 315; sequence YHPVVCDACQVRSFTGFRYKCQRCANYQLCQSCFWRGRTSQNHSNEHEMKEYSSYKS. Zn(2+) contacts are provided by cysteine 264, cysteine 267, cysteine 279, cysteine 282, cysteine 288, cysteine 291, histidine 301, and histidine 305. Positions 434–508 form a coiled coil; sequence SMVGDERTLI…EHLMAQLNTG (75 aa). The segment at 468–590 is essential for interaction with ctn-1; the sequence is DGLAGLRDRK…DENGVTINGF (123 aa). Residues 484 to 490 form an essential for interaction with dys-1 region; it reads MFEMQQR.

This sequence belongs to the dystrophin family. Dystrobrevin subfamily. Component of the dystrophin glycoprotein complex (DGC). Interacts with dystrophin (dys-1) and syntrophin (stn-1) to form the DGC. Interacts (via C-terminus) with ctn-1 (via N-terminus); the interaction is required for localization of the dystrophin complex and ctn-1 near dense bodies in muscle cells. As to expression, from late embryogenesis to adulthood, expressed in neurons and muscles; particularly strong in the ventral nerve cord and in muscles of the body wall, head pharyngeal, and vulva; weaker in the intestinal muscle (at protein level).

Its subcellular location is the cytoplasm. Plays a role in cholinergic transmission and as a functional partner of dystrophin (dys-1), necessary for muscle maintenance. Required for localization of ctn-1 near dense bodies in muscle cells. This is Dystrobrevin-1 from Caenorhabditis elegans.